The sequence spans 57 residues: Large ribosomal subunit protein bL32 (57 aa).

The segment covering 1-19 (MAVPKRRMSRSNTRSRRSQ) has biased composition (basic residues). The interval 1–21 (MAVPKRRMSRSNTRSRRSQWK) is disordered.

It belongs to the bacterial ribosomal protein bL32 family.

In Mycobacteroides abscessus (strain ATCC 19977 / DSM 44196 / CCUG 20993 / CIP 104536 / JCM 13569 / NCTC 13031 / TMC 1543 / L948) (Mycobacterium abscessus), this protein is Large ribosomal subunit protein bL32.